Here is a 335-residue protein sequence, read N- to C-terminus: Tetraacyldisaccharide 4'-kinase (335 aa).

ATP is bound at residue 59-66 (TAGGNGKT).

The protein belongs to the LpxK family.

The catalysed reaction is a lipid A disaccharide + ATP = a lipid IVA + ADP + H(+). Its pathway is glycolipid biosynthesis; lipid IV(A) biosynthesis; lipid IV(A) from (3R)-3-hydroxytetradecanoyl-[acyl-carrier-protein] and UDP-N-acetyl-alpha-D-glucosamine: step 6/6. In terms of biological role, transfers the gamma-phosphate of ATP to the 4'-position of a tetraacyldisaccharide 1-phosphate intermediate (termed DS-1-P) to form tetraacyldisaccharide 1,4'-bis-phosphate (lipid IVA). This Vibrio vulnificus (strain YJ016) protein is Tetraacyldisaccharide 4'-kinase.